We begin with the raw amino-acid sequence, 141 residues long: Hemoglobin subunit alpha (141 aa).

The Globin domain occupies V1–R141. At S3 the chain carries Phosphoserine. N6-succinyllysine occurs at positions 7 and 11. K16 bears the N6-acetyllysine; alternate mark. K16 is modified (N6-succinyllysine; alternate). Y24 carries the post-translational modification Phosphotyrosine. At S35 the chain carries Phosphoserine. N6-succinyllysine is present on K40. H58 is a binding site for O2. Heme b is bound at residue H87. S102 carries the post-translational modification Phosphoserine. At T108 the chain carries Phosphothreonine. S124 and S131 each carry phosphoserine. Phosphothreonine occurs at positions 134 and 137. A Phosphoserine modification is found at S138.

It belongs to the globin family. In terms of assembly, heterotetramer of two alpha chains and two beta chains. Red blood cells.

Its function is as follows. Involved in oxygen transport from the lung to the various peripheral tissues. In terms of biological role, hemopressin acts as an antagonist peptide of the cannabinoid receptor CNR1. Hemopressin-binding efficiently blocks cannabinoid receptor CNR1 and subsequent signaling. This chain is Hemoglobin subunit alpha (HBA), found in Pteropus poliocephalus (Grey-headed flying fox).